Here is a 251-residue protein sequence, read N- to C-terminus: CDP-diacylglycerol pyrophosphatase (251 aa).

The chain crosses the membrane as a helical span at residues 4–24 (AGLLFLVMIVIAVVAAGIGYW).

The protein belongs to the Cdh family.

It localises to the cell inner membrane. It carries out the reaction a CDP-1,2-diacyl-sn-glycerol + H2O = a 1,2-diacyl-sn-glycero-3-phosphate + CMP + 2 H(+). It participates in phospholipid metabolism; CDP-diacylglycerol degradation; phosphatidate from CDP-diacylglycerol: step 1/1. This is CDP-diacylglycerol pyrophosphatase from Escherichia coli (strain ATCC 8739 / DSM 1576 / NBRC 3972 / NCIMB 8545 / WDCM 00012 / Crooks).